The chain runs to 373 residues: MRSGFLSGARRLWARRAFSRTPPPSEELLARGGPLRAFLERRVGSEAGGLDAGYPQLAAAARLLSEKERELRDTESLLHDENEDLKKLAESEIALCQKQITELKHQIISLLVPSEEMDGSDLILEVTAGVGGQEAMLFTSEMFDMYQQYAAFKRWHFETLEYFPSELGGLRHASASVGGPEAYRHMKFEGGVHRVQRVPKTEKQGRIHTSTMTVAILPQPTEIKLVINPKDLRIDTKRASGAGGQHVNTTDSAVRIVHLPTGIISECQQERSQLKNRELAMKKLRARLYSMHLEEETAKRYNARKIQVGTKGRSEKIRTYNFPQNRVTDHRINKSLHDLESFMQGDCLLDDMIQSLKDCSDYEALVEMISRRD.

A mitochondrion-targeting transit peptide spans 1 to 25 (MRSGFLSGARRLWARRAFSRTPPPS). The stretch at 56-110 (QLAAAARLLSEKERELRDTESLLHDENEDLKKLAESEIALCQKQITELKHQIISL) forms a coiled coil. The segment at 229-293 (PKDLRIDTKR…LRARLYSMHL (65 aa)) is GGQ domain. The GGQ motif lies at 243 to 245 (GGQ). Gln-245 bears the N5-methylglutamine mark.

Belongs to the prokaryotic/mitochondrial release factor family. In terms of processing, methylation of glutamine in the GGQ triplet by HEMK1 is conserved from bacteria to mammals.

The protein localises to the mitochondrion. Its function is as follows. Mitochondrial peptide chain release factor that directs the termination of translation in response to the peptide chain termination codons UAA and UAG. This Mus musculus (Mouse) protein is Peptide chain release factor 1-like, mitochondrial (Mtrf1l).